The sequence spans 383 residues: Dynein axonemal assembly factor 11 (383 aa).

4 LRR repeats span residues 20-45 (LSNL…ACRE), 46-66 (LEIL…QHLK), 67-89 (YLKY…GCEA), and 90-110 (LERL…ERLR). The 19-residue stretch at 128–146 (VAGYRAYVVHALPQLRELD) folds into the LRRCT domain. Residues 201–244 (KGERLYGHTPEERLQMLREKEEEERRKREEQRERERSSQFGAIR) are disordered. Residues 211-239 (EERLQMLREKEEEERRKREEQRERERSSQ) are a coiled coil.

This sequence belongs to the tilB family.

Its subcellular location is the cytoplasm. It localises to the cytoskeleton. The protein resides in the flagellum basal body. Functionally, involved in the regulation of the cell cycle; is required for the basal body replication and new flagellum biogenesis. The sequence is that of Dynein axonemal assembly factor 11 (dnaaf11) from Trypanosoma brucei brucei.